We begin with the raw amino-acid sequence, 721 residues long: mRNA (2'-O-methyladenosine-N(6)-)-methyltransferase (721 aa).

2 stretches are compositionally biased toward polar residues: residues 1-10 (MTSENHTTIK) and 19-36 (PTGS…TSKP). The tract at residues 1–37 (MTSENHTTIKADSALVMSPTGSTSQAAPFSPSTSKPI) is disordered. A WW domain is found at 43 to 77 (ELIQAGWSKCWSKRENRPYYFNRFTNQSLWEMPVL). The tract at residues 93 to 170 (PASGEANADA…KQGQASTPAP (78 aa)) is disordered. The span at 132–148 (IPATPTTPTVPISPSTP) shows a compositional bias: low complexity. Substrate-binding residues include Arg-239 and Arg-269. Residue 558–561 (NPPF) participates in S-adenosyl-L-methionine binding. Substrate is bound by residues Glu-563 and 593–597 (WRDPP). 619-621 (FEH) provides a ligand contact to S-adenosyl-L-methionine. Residues 675–686 (SGRSLPSPGPSS) show a composition bias toward low complexity. The interval 675–721 (SGRSLPSPGPSSTNTGEKDSKPAPERTAPSQDNSSPVDKTAQDTTNT) is disordered. Residues 702–721 (APSQDNSSPVDKTAQDTTNT) are compositionally biased toward polar residues.

The protein belongs to the CAPAM family.

Its subcellular location is the nucleus. The enzyme catalyses a 5'-end (N(7)-methyl 5'-triphosphoguanosine)-(2'-O-methyladenosine) in mRNA + S-adenosyl-L-methionine = a 5'-end (N(7)-methyl 5'-triphosphoguanosine)-(N(6),2'-O-dimethyladenosine) in mRNA + S-adenosyl-L-homocysteine + H(+). Its activity is regulated as follows. Cap-specific adenosine methyltransferase activity is inhibited by zinc. Cap-specific adenosine methyltransferase that catalyzes formation of N(6),2'-O-dimethyladenosine cap (m6A(m)) by methylating the adenosine at the second transcribed position of capped mRNAs. The protein is mRNA (2'-O-methyladenosine-N(6)-)-methyltransferase (pcif1) of Danio rerio (Zebrafish).